We begin with the raw amino-acid sequence, 701 residues long: MAFEENFLSAQVLYQLSWNGKLEHPHIIDVEYASDQGGLRLRDVKERLTRLRGHGINDSFSWSYKRTYSKTFIWNDLSDDDVIHPLCGSGEYVLRASELIDTNERKSCDVHSRHSNKSMQSSPTMLLDNVTSKQDTIIGDVHFGALESGENRRIGDKLNCLVRNSGANLEEVKSLRGVSAVISQSLPTLYADQEIMDVEKSDFCLSSSDTEISPRPKMTVDSIKPVKDVNLVVMTKSSTVHGVHTPPSPSLKSSTELPFSPGGTKRLWEKEIRKSLFRTRNSSNVNSVSTEDFTAVHMELPPNTHSTHEDNSFWRDSRSKSPSPSSLNELKEVQIDKEEVEQSTSQLIRLLWARWTGGSSKGKRIPYNTCEGASTKIPESKHNSPYRTKSPYKEIRSTHVEGSHQETRQSLAVQSKARVSLEIKEILPPEECMHYPSPMTVQNVTEVASPHAQTDGGGDVCTIKTIVSEQASQPYPEPRDLRTDQGILSEKTPGLHIAVLEGLTSDAPSGPAEAEVDTPLPAVARAKTGNTLSKLKTIASSKPLPPGFHKGTNDTKPVQITPRRTPRNSIPLASPPLVRSFSRDAVRGFSSLAAISLCPDKDSVACTPSPEKTIVKKRINYSAREEMPLVPGLTTLDWEKALQEATTDCLPPPNFSDILQECSICRRTFKPDSLQVHMRGCHPPQYARAFSARASPHVVRC.

The interval 8-101 (LSAQVLYQLS…YVLRASELID (94 aa)) is DIX-like oligomerization domain. 4 disordered regions span residues 238-262 (STVH…FSPG), 300-329 (LPPN…SLNE), 366-389 (PYNT…YRTK), and 538-575 (IASS…LASP). Basic and acidic residues predominate over residues 306 to 319 (STHEDNSFWRDSRS). Residues 658–687 (ILQECSICRRTFKPDSLQVHMRGCHPPQYA) form a C2HC/C3H-type zinc finger. Zn(2+) contacts are provided by C662, C665, H677, and C681.

Belongs to the SOSEKI family. Homodimer. Forms long polymer filaments with other SOKs proteins polymers crucial for polar localization and biological activity. Requires Zn(2+) as cofactor.

Its subcellular location is the cell membrane. SOSEKI proteins locally interpret global polarity cues and can influence cell division orientation to coordinate cell polarization relative to body axes. In Physcomitrium patens (Spreading-leaved earth moss), this protein is Protein SOSEKI 1.